Reading from the N-terminus, the 367-residue chain is 3-isopropylmalate dehydrogenase (367 aa).

An NAD(+)-binding site is contributed by 77 to 90; the sequence is GPKWDAVPYEVRPE. Residues Arg97, Arg107, Arg135, and Asp226 each coordinate substrate. 3 residues coordinate Mg(2+): Asp226, Asp250, and Asp254. 290-302 is a binding site for NAD(+); that stretch reads GSAPDIAGKGIAN.

This sequence belongs to the isocitrate and isopropylmalate dehydrogenases family. LeuB type 1 subfamily. Homodimer. Requires Mg(2+) as cofactor. Mn(2+) serves as cofactor.

Its subcellular location is the cytoplasm. The enzyme catalyses (2R,3S)-3-isopropylmalate + NAD(+) = 4-methyl-2-oxopentanoate + CO2 + NADH. It participates in amino-acid biosynthesis; L-leucine biosynthesis; L-leucine from 3-methyl-2-oxobutanoate: step 3/4. Functionally, catalyzes the oxidation of 3-carboxy-2-hydroxy-4-methylpentanoate (3-isopropylmalate) to 3-carboxy-4-methyl-2-oxopentanoate. The product decarboxylates to 4-methyl-2 oxopentanoate. In Mesorhizobium japonicum (strain LMG 29417 / CECT 9101 / MAFF 303099) (Mesorhizobium loti (strain MAFF 303099)), this protein is 3-isopropylmalate dehydrogenase.